The chain runs to 442 residues: Putative mannan endo-1,6-alpha-mannosidase C970.02 (442 aa).

Residues 1–19 (MSLTIFISLATILFSFAEA) form the signal peptide. N-linked (GlcNAc...) asparagine glycans are attached at residues Asn-25, Asn-82, Asn-107, Asn-131, Asn-201, Asn-236, Asn-261, Asn-264, Asn-277, and Asn-361.

It belongs to the glycosyl hydrolase 76 family.

The catalysed reaction is Random hydrolysis of (1-&gt;6)-alpha-D-mannosidic linkages in unbranched (1-&gt;6)-mannans.. The chain is Putative mannan endo-1,6-alpha-mannosidase C970.02 from Schizosaccharomyces pombe (strain 972 / ATCC 24843) (Fission yeast).